The chain runs to 303 residues: MIAMLTVLLYLALILEPRTAVQAGHLPKPIIWAEPGSVIAAYTSVIIWCWGSWEAQYYYLDKEKSVNPWDTEVPLENRNKTKFKIRFMTASYAGIYNCYYKSAAGFSEHSDAMELVMTGAYENPSLSVYPSSNVTSGVSISFKCSSSTLFGRFILIQEGKHGLSWTLDSQHQANQPTHATFVLDAVAPNHNGTFRCYGFFRNEPQVWSKPSNSLDLMISETKEQSCTPTEDGLETYQKILIGVLVSFLLLFFLLLFLILIGYQCRHKNKANASVKNTQSEDNAELNSWNPQNEDPPRELCTPR.

A signal peptide spans 1–23; it reads MIAMLTVLLYLALILEPRTAVQA. At 24 to 238 the chain is on the extracellular side; the sequence is GHLPKPIIWA…TEDGLETYQK (215 aa). Ig-like C2-type domains are found at residues 42-123 and 124-212; these read YTSV…AYEN and PSLS…KPSN. A disulfide bond links C49 and C98. N79, N133, and N191 each carry an N-linked (GlcNAc...) asparagine glycan. A disulfide bond links C144 and C196. Residues 239-260 form a helical membrane-spanning segment; that stretch reads ILIGVLVSFLLLFFLLLFLILI. Topologically, residues 261 to 303 are cytoplasmic; that stretch reads GYQCRHKNKANASVKNTQSEDNAELNSWNPQNEDPPRELCTPR. Polar residues predominate over residues 275 to 292; it reads KNTQSEDNAELNSWNPQN. The segment at 275-303 is disordered; that stretch reads KNTQSEDNAELNSWNPQNEDPPRELCTPR.

In terms of assembly, monomer and homodimer. In terms of tissue distribution, expressed on mast cells (at protein level). Also expressed at much lower levels on natural killer cells (at protein level).

The protein localises to the cell membrane. Its function is as follows. Plays a role in mast cell activation. The protein is Leukocyte immunoglobulin-like receptor subfamily B member 4B of Mus musculus (Mouse).